We begin with the raw amino-acid sequence, 105 residues long: Phosphoribosyl-AMP cyclohydrolase (105 aa).

D72 is a Mg(2+) binding site. C73 is a binding site for Zn(2+). D74 and D76 together coordinate Mg(2+). Zn(2+) is bound by residues C89 and C96.

The protein belongs to the PRA-CH family. Homodimer. Mg(2+) serves as cofactor. The cofactor is Zn(2+).

It localises to the cytoplasm. It catalyses the reaction 1-(5-phospho-beta-D-ribosyl)-5'-AMP + H2O = 1-(5-phospho-beta-D-ribosyl)-5-[(5-phospho-beta-D-ribosylamino)methylideneamino]imidazole-4-carboxamide. Its pathway is amino-acid biosynthesis; L-histidine biosynthesis; L-histidine from 5-phospho-alpha-D-ribose 1-diphosphate: step 3/9. Its function is as follows. Catalyzes the hydrolysis of the adenine ring of phosphoribosyl-AMP. The protein is Phosphoribosyl-AMP cyclohydrolase of Listeria monocytogenes serotype 4b (strain CLIP80459).